A 175-amino-acid polypeptide reads, in one-letter code: MPGAAEALPTVTVTLVAGAVPPASGALTAHCIGGFWREVGVASDQSLVLTAPKRVEGLFLTLSGSNLTVKVAYNSSGSCEIEKIVGSEIDSTGKFAFPGHREIHVLDTDYEGYAILRVSLMWRGRNFRVLKYFTRSLEDKDRLGFWKFRELTADTGLYLAARPGRCAELLKEELI.

Residues 1 to 25 form the signal peptide; that stretch reads MPGAAEALPTVTVTLVAGAVPPASG. Asn-66 and Asn-74 each carry an N-linked (GlcNAc...) asparagine glycan. A disulfide bond links Cys-79 and Cys-166.

Belongs to the calycin superfamily. Lipocalin family.

It localises to the secreted. Its function is as follows. May play a role in male fertility. May act as a retinoid carrier protein within the epididymis. The sequence is that of Epididymal-specific lipocalin-8 (LCN8) from Homo sapiens (Human).